Reading from the N-terminus, the 294-residue chain is Putative glucose-6-phosphate 1-epimerase (294 aa).

2 residues coordinate substrate: arginine 74 and arginine 99. The active site involves histidine 164. A substrate-binding site is contributed by aspartate 208. Glutamate 267 is an active-site residue.

This sequence belongs to the glucose-6-phosphate 1-epimerase family. In terms of assembly, monomer in solution.

It catalyses the reaction alpha-D-glucose 6-phosphate = beta-D-glucose 6-phosphate. The chain is Putative glucose-6-phosphate 1-epimerase (yeaD) from Escherichia coli (strain K12).